Reading from the N-terminus, the 381-residue chain is Succinyl-diaminopimelate desuccinylase (381 aa).

His72 lines the Zn(2+) pocket. Asp74 is an active-site residue. Asp105 serves as a coordination point for Zn(2+). The Proton acceptor role is filled by Glu139. Residues Glu140, Glu168, and His354 each coordinate Zn(2+).

Belongs to the peptidase M20A family. DapE subfamily. In terms of assembly, homodimer. Zn(2+) serves as cofactor. Requires Co(2+) as cofactor.

It catalyses the reaction N-succinyl-(2S,6S)-2,6-diaminopimelate + H2O = (2S,6S)-2,6-diaminopimelate + succinate. It functions in the pathway amino-acid biosynthesis; L-lysine biosynthesis via DAP pathway; LL-2,6-diaminopimelate from (S)-tetrahydrodipicolinate (succinylase route): step 3/3. Functionally, catalyzes the hydrolysis of N-succinyl-L,L-diaminopimelic acid (SDAP), forming succinate and LL-2,6-diaminopimelate (DAP), an intermediate involved in the bacterial biosynthesis of lysine and meso-diaminopimelic acid, an essential component of bacterial cell walls. The sequence is that of Succinyl-diaminopimelate desuccinylase from Shewanella sp. (strain MR-7).